A 990-amino-acid polypeptide reads, in one-letter code: A-type ATP synthase subunit B (990 aa).

A DOD-type homing endonuclease domain is found at 491-614; that stretch reads VAGLIASDGS…LQLLLKRLGV (124 aa).

The protein belongs to the ATPase alpha/beta chains family. In terms of assembly, has multiple subunits with at least A(3), B(3), C, D, E, F, H, I and proteolipid K(x). This protein undergoes a protein self splicing that involves a post-translational excision of the VDE intervening region (intein) followed by peptide ligation.

It is found in the cell membrane. In terms of biological role, component of the A-type ATP synthase that produces ATP from ADP in the presence of a proton gradient across the membrane. The B chain is a regulatory subunit. The chain is A-type ATP synthase subunit B from Methanopyrus kandleri (strain AV19 / DSM 6324 / JCM 9639 / NBRC 100938).